Here is a 399-residue protein sequence, read N- to C-terminus: Bombesin receptor subtype-3 (399 aa).

Residues 1 to 41 are Extracellular-facing; sequence MSQRQPQSPNQTLISITNDTETSSSAVSNDTTPKGWTGDNS. Residues asparagine 10, asparagine 18, and asparagine 29 are each glycosylated (N-linked (GlcNAc...) asparagine). A helical transmembrane segment spans residues 42 to 63; that stretch reads PGIEALCAIYITYAVIISVGIL. The Cytoplasmic segment spans residues 64 to 82; that stretch reads GNAILIKVFFKTKSMQTVP. A helical transmembrane segment spans residues 83–103; sequence NIFITSLAFGDLLLLLTCVPV. Over 104–121 the chain is Extracellular; the sequence is DATHYLAEGWLFGKVGCK. A disulfide bridge connects residues cysteine 120 and cysteine 203. The chain crosses the membrane as a helical span at residues 122–143; the sequence is VLSFIRLTSVGVSVFTLTILSA. The Cytoplasmic segment spans residues 144–163; it reads DRYKAVVKPLERQPSNAILK. Residues 164-184 traverse the membrane as a helical segment; sequence TCAKAGGIWIMAMIFALPEAI. At 185–220 the chain is on the extracellular side; that stretch reads FSNVYTFQDPNRNVTFESCNSYPISERLLQEIHSLL. A helical transmembrane segment spans residues 221 to 241; the sequence is CFLVFYIIPLSIISVYYSLIA. The Cytoplasmic segment spans residues 242 to 272; that stretch reads RTLYKSTLNIPTEEQSHARKQIESRKRIAKT. A helical membrane pass occupies residues 273-293; that stretch reads VLVLVALFALCWLPNHLLYLY. Residues 294 to 313 lie on the Extracellular side of the membrane; sequence HSFTYESYAEPSDVPFVVTI. A helical transmembrane segment spans residues 314 to 333; sequence FSRVLAFSNSCVNPFALYWL. Over 334 to 399 the chain is Cytoplasmic; sequence SKTFQKHFKA…STAKKGEDKV (66 aa). Cysteine 347 is lipidated: S-palmitoyl cysteine.

This sequence belongs to the G-protein coupled receptor 1 family. Interacts with C6orf89.

Its subcellular location is the cell membrane. Functionally, role in sperm cell division, maturation, or function. This receptor mediates its action by association with G proteins that activate a phosphatidylinositol-calcium second messenger system. The sequence is that of Bombesin receptor subtype-3 (Brs3) from Rattus norvegicus (Rat).